The chain runs to 153 residues: UPF0260 protein CKO_01185 (153 aa).

The protein belongs to the UPF0260 family.

The chain is UPF0260 protein CKO_01185 from Citrobacter koseri (strain ATCC BAA-895 / CDC 4225-83 / SGSC4696).